A 264-amino-acid chain; its full sequence is Ribonuclease HII (264 aa).

An RNase H type-2 domain is found at 69–263; it reads KVVCGIDEVG…EENAKTITKP (195 aa). The a divalent metal cation site is built by Asp-75, Glu-76, and Asp-166.

The protein belongs to the RNase HII family. Requires Mn(2+) as cofactor. Mg(2+) is required as a cofactor.

The protein resides in the cytoplasm. The catalysed reaction is Endonucleolytic cleavage to 5'-phosphomonoester.. Its function is as follows. Endonuclease that specifically degrades the RNA of RNA-DNA hybrids. The polypeptide is Ribonuclease HII (Macrococcus caseolyticus (strain JCSC5402) (Macrococcoides caseolyticum)).